Here is a 374-residue protein sequence, read N- to C-terminus: Anthranilate O-methyltransferase 2 (374 aa).

Y18 is an S-adenosyl-L-homocysteine binding site. Q25 contacts anthranilate. Residues C59, N64, D98, L99, S142, and Y143 each contribute to the S-adenosyl-L-homocysteine site. An anthranilate-binding site is contributed by W164. Mg(2+)-binding residues include E261 and F263.

The protein belongs to the methyltransferase superfamily. Type-7 methyltransferase family. SABATH subfamily.

It catalyses the reaction anthranilate + S-adenosyl-L-methionine = O-methyl anthranilate + S-adenosyl-L-homocysteine. Its function is as follows. Methyltransferase involved in the biosynthesis of methyl anthranilate in response to stresses. Utilizes anthranilic acid as substrate. Produces exclusively the O-methyl ester. This is Anthranilate O-methyltransferase 2 (AAMT2) from Zea mays (Maize).